A 390-amino-acid polypeptide reads, in one-letter code: 8-amino-7-oxononanoate synthase (390 aa).

Position 20 (R20) interacts with substrate. G107–F108 is a binding site for pyridoxal 5'-phosphate. H132 contacts substrate. Pyridoxal 5'-phosphate is bound by residues S179, D204–H207, and T235–K238. N6-(pyridoxal phosphate)lysine is present on K238. T352 contacts substrate.

It belongs to the class-II pyridoxal-phosphate-dependent aminotransferase family. BioF subfamily. In terms of assembly, homodimer. The cofactor is pyridoxal 5'-phosphate.

The catalysed reaction is 6-carboxyhexanoyl-[ACP] + L-alanine + H(+) = (8S)-8-amino-7-oxononanoate + holo-[ACP] + CO2. It functions in the pathway cofactor biosynthesis; biotin biosynthesis. Functionally, catalyzes the decarboxylative condensation of pimeloyl-[acyl-carrier protein] and L-alanine to produce 8-amino-7-oxononanoate (AON), [acyl-carrier protein], and carbon dioxide. The protein is 8-amino-7-oxononanoate synthase of Exiguobacterium sibiricum (strain DSM 17290 / CCUG 55495 / CIP 109462 / JCM 13490 / 255-15).